Reading from the N-terminus, the 294-residue chain is Small ribosomal subunit biogenesis GTPase RsgA 2, mitochondrial (294 aa).

The transit peptide at 1–68 directs the protein to the mitochondrion; the sequence is MQTFSSAAAL…RSFLAPVLPL (68 aa). Residues 155-294 form the CP-type G domain; that stretch reads VSEVLDPPVA…VSFFLSYFIL (140 aa). Residue 255 to 263 participates in GTP binding; sequence GPSGVGKSS.

This sequence belongs to the TRAFAC class YlqF/YawG GTPase family.

It is found in the mitochondrion. The chain is Small ribosomal subunit biogenesis GTPase RsgA 2, mitochondrial from Arabidopsis thaliana (Mouse-ear cress).